The chain runs to 348 residues: VIP36-like protein (348 aa).

The signal sequence occupies residues 1 to 38 (MAVALGPSGWWQRWRRRLSAREVSRMLLLLLLLGSGQG). Over 39–313 (PRQVGAGQTF…APLPPLSGLA (275 aa)) the chain is Lumenal. The L-type lectin-like domain occupies 49-274 (EYLKREHSLS…DVISLKLFEL (226 aa)). 2 residues coordinate a carbohydrate: Ser-93 and Asp-128. Residues Asp-159, Tyr-161, and Asn-163 each contribute to the Ca(2+) site. The a carbohydrate site is built by Tyr-161 and Asn-163. Asn-181 carries an N-linked (GlcNAc...) asparagine glycan. An a carbohydrate-binding site is contributed by His-188. Asp-191 contributes to the Ca(2+) binding site. Cys-200 and Cys-237 are disulfide-bonded. Residue 258-260 (GDL) participates in a carbohydrate binding. Residues 314–334 (LFLIVFFSLVFSVFAIVIGII) form a helical membrane-spanning segment. Topologically, residues 335–348 (LYNKWQDQSRKRFY) are cytoplasmic. The Endoplasmic reticulum retention signal motif lies at 344–346 (RKR).

It localises to the endoplasmic reticulum membrane. It is found in the golgi apparatus membrane. May be involved in the regulation of export from the endoplasmic reticulum of a subset of glycoproteins. May function as a regulator of ERGIC-53. This chain is VIP36-like protein (LMAN2L), found in Bos taurus (Bovine).